The primary structure comprises 559 residues: D-2-hydroxyglutarate dehydrogenase, mitochondrial (559 aa).

The N-terminal 78 residues, 1-78 (MMMQKLRRSG…GMLLQQYKCF (78 aa)), are a transit peptide targeting the mitochondrion. One can recognise an FAD-binding PCMH-type domain in the interval 130–309 (YKGSSKLMLL…TKVSILTQPK (180 aa)).

Belongs to the FAD-binding oxidoreductase/transferase type 4 family. In terms of assembly, homodimer. It depends on FAD as a cofactor.

Its subcellular location is the mitochondrion. The catalysed reaction is (R)-2-hydroxyglutarate + A = 2-oxoglutarate + AH2. Its function is as follows. Catalyzes the oxidation of (R)-2-hydroxyglutarate to 2-oxoglutarate. May be involved in the catabolism of propionyl-CoA derived from beta-oxidation. Involved in degradation of lysine for the supply of carbon and electrons to the ETF/ETFQO complex during dark-induced sugar starvation. The sequence is that of D-2-hydroxyglutarate dehydrogenase, mitochondrial (D2HGDH) from Arabidopsis thaliana (Mouse-ear cress).